We begin with the raw amino-acid sequence, 408 residues long: Imidazolonepropionase (408 aa).

Residues histidine 73 and histidine 75 each contribute to the Fe(3+) site. Zn(2+)-binding residues include histidine 73 and histidine 75. The 4-imidazolone-5-propanoate site is built by arginine 82, tyrosine 145, and histidine 178. Residue tyrosine 145 coordinates N-formimidoyl-L-glutamate. A Fe(3+)-binding site is contributed by histidine 243. Position 243 (histidine 243) interacts with Zn(2+). 4-imidazolone-5-propanoate is bound at residue glutamine 246. Aspartate 318 serves as a coordination point for Fe(3+). Aspartate 318 provides a ligand contact to Zn(2+). The N-formimidoyl-L-glutamate site is built by asparagine 320 and glycine 322. Serine 323 provides a ligand contact to 4-imidazolone-5-propanoate.

Belongs to the metallo-dependent hydrolases superfamily. HutI family. The cofactor is Zn(2+). Fe(3+) serves as cofactor.

Its subcellular location is the cytoplasm. It carries out the reaction 4-imidazolone-5-propanoate + H2O = N-formimidoyl-L-glutamate. It functions in the pathway amino-acid degradation; L-histidine degradation into L-glutamate; N-formimidoyl-L-glutamate from L-histidine: step 3/3. Its function is as follows. Catalyzes the hydrolytic cleavage of the carbon-nitrogen bond in imidazolone-5-propanoate to yield N-formimidoyl-L-glutamate. It is the third step in the universal histidine degradation pathway. The chain is Imidazolonepropionase from Shewanella sediminis (strain HAW-EB3).